We begin with the raw amino-acid sequence, 752 residues long: Zinc finger protein 184 (752 aa).

One can recognise a KRAB domain in the interval 28-99 (VTFKDVIVDF…EPSIPVGTPG (72 aa)). Phosphoserine is present on residues S117, S122, and S200. K207 participates in a covalent cross-link: Glycyl lysine isopeptide (Lys-Gly) (interchain with G-Cter in SUMO2). 19 C2H2-type zinc fingers span residues 223–245 (CKCN…QRTH), 251–273 (YKCN…QRIH), 279–301 (YKCD…QRIH), 307–329 (YKCD…QRIH), 335–357 (YTCN…QKIH), 363–385 (FKCD…QKIH), 391–413 (YKCN…HMIH), 419–441 (YECN…QKTH), 447–469 (YDCA…LKIH), 475–497 (YKCN…RRIH), 503–525 (FECS…QKTH), 531–553 (YECK…ERIH), 559–581 (YQCH…RKIH), 587–609 (YKCN…KRIH), 615–637 (YECA…QKTH), 643–665 (YHCN…QRIH), 671–693 (YKCN…QNTH), 699–721 (YNCN…QRIH), and 727–749 (FGCN…QRLH).

The protein belongs to the krueppel C2H2-type zinc-finger protein family.

It localises to the nucleus. In terms of biological role, may be involved in transcriptional regulation. This Bos taurus (Bovine) protein is Zinc finger protein 184 (ZNF184).